The primary structure comprises 260 residues: Snake venom serine protease homolog KN4 (260 aa).

The signal sequence occupies residues 1–18 (MVLIRVLANLLILQLSYA). Positions 19-24 (QKSSEL) are excised as a propeptide. In terms of domain architecture, Peptidase S1 spans 25–251 (IIGGDECNIN…HLDWIQNIIA (227 aa)). Intrachain disulfides connect Cys31-Cys165, Cys52-Cys68, Cys100-Cys258, Cys144-Cys212, Cys176-Cys191, and Cys202-Cys227. Asn83, Asn123, Asn124, Asn156, and Asn172 each carry an N-linked (GlcNAc...) asparagine glycan. N-linked (GlcNAc...) asparagine glycosylation occurs at Asn253.

The protein belongs to the peptidase S1 family. Snake venom subfamily. In terms of tissue distribution, expressed by the venom gland.

It localises to the secreted. Functionally, snake venom serine protease homolog that may act in the hemostasis system of the prey. The sequence is that of Snake venom serine protease homolog KN4 from Trimeresurus stejnegeri (Chinese green tree viper).